The following is a 338-amino-acid chain: Probable tRNA pseudouridine synthase B (338 aa).

Aspartate 78 functions as the Nucleophile in the catalytic mechanism. Residues 245 to 320 enclose the PUA domain; sequence LPKIILRDSA…LAATSVRIMM (76 aa).

This sequence belongs to the pseudouridine synthase TruB family. Type 2 subfamily.

It carries out the reaction uridine(55) in tRNA = pseudouridine(55) in tRNA. Functionally, could be responsible for synthesis of pseudouridine from uracil-55 in the psi GC loop of transfer RNAs. The polypeptide is Probable tRNA pseudouridine synthase B (Methanosarcina barkeri (strain Fusaro / DSM 804)).